The sequence spans 205 residues: Dephospho-CoA kinase (205 aa).

The 200-residue stretch at 4-203 folds into the DPCK domain; sequence KIGITGGIGS…QKIHYLCSAK (200 aa). Residue 12 to 17 participates in ATP binding; the sequence is GSGKSV.

Belongs to the CoaE family.

It is found in the cytoplasm. It carries out the reaction 3'-dephospho-CoA + ATP = ADP + CoA + H(+). The protein operates within cofactor biosynthesis; coenzyme A biosynthesis; CoA from (R)-pantothenate: step 5/5. In terms of biological role, catalyzes the phosphorylation of the 3'-hydroxyl group of dephosphocoenzyme A to form coenzyme A. This chain is Dephospho-CoA kinase, found in Bacteroides fragilis (strain YCH46).